We begin with the raw amino-acid sequence, 119 residues long: Large ribosomal subunit protein uL18 (119 aa).

This sequence belongs to the universal ribosomal protein uL18 family. In terms of assembly, part of the 50S ribosomal subunit; part of the 5S rRNA/L5/L18/L25 subcomplex. Contacts the 5S and 23S rRNAs.

In terms of biological role, this is one of the proteins that bind and probably mediate the attachment of the 5S RNA into the large ribosomal subunit, where it forms part of the central protuberance. The protein is Large ribosomal subunit protein uL18 of Mesorhizobium japonicum (strain LMG 29417 / CECT 9101 / MAFF 303099) (Mesorhizobium loti (strain MAFF 303099)).